The sequence spans 506 residues: Maturase K (506 aa).

It belongs to the intron maturase 2 family. MatK subfamily.

Its subcellular location is the plastid. It localises to the chloroplast. In terms of biological role, usually encoded in the trnK tRNA gene intron. Probably assists in splicing its own and other chloroplast group II introns. This is Maturase K from Prunus persica (Peach).